A 517-amino-acid polypeptide reads, in one-letter code: Ribonuclease Y (517 aa).

Residues 3 to 23 (AILYVIVAVIALILGGAAGVA) traverse the membrane as a helical segment. A KH domain is found at 207 to 292 (TVTVVSLPND…EMVEKAQKEV (86 aa)). The HD domain occupies 333–426 (VLKHSIEVAH…VAAADAISAA (94 aa)).

It belongs to the RNase Y family.

It is found in the cell membrane. Functionally, endoribonuclease that initiates mRNA decay. The chain is Ribonuclease Y from Symbiobacterium thermophilum (strain DSM 24528 / JCM 14929 / IAM 14863 / T).